A 364-amino-acid polypeptide reads, in one-letter code: O-methyltransferase ZRP4 (364 aa).

Gly208, Asp231, Asp251, Met252, and Lys265 together coordinate S-adenosyl-L-methionine. Catalysis depends on His269, which acts as the Proton acceptor.

The protein belongs to the class I-like SAM-binding methyltransferase superfamily. Cation-independent O-methyltransferase family. COMT subfamily. Homodimer. In terms of tissue distribution, accumulates preferentially in the roots and is located predominantly in the region of the endodermis, low levels are seen in the leaves, stems and other shoot organs.

Functionally, may be involved in the O-methylation of suberin phenylpropanoid precursors. The polypeptide is O-methyltransferase ZRP4 (ZRP4) (Zea mays (Maize)).